Reading from the N-terminus, the 328-residue chain is MVKLAIDMMGGDNAPDIVLEAVQKAVEDFKNLEIMLFGDEKKYNLNHERIEFRHCSEKIEMEDEPVRAIKRKKDSSMVKMAEAVKSGEADGCVSAGNTGALMSVGLFIVGRIKGVARPALVVTLPTIDGKGFVFLDVGANADAKPEHLLQYAQLGDIYAQKIRGIDNPKISLLNIGTEPAKGNSLTKKSFELLNQDHSLNFVGNIEAKTLMDGDTDVVVTDGYTGNMVLKNLEGTAKSIGKMLKDTIMSSTKNKLAGAILKKDLAEFAKKMDYSEYGGSVLLGLEGTVVKAHGSSNAKAFYSAIRQAKIAGEQNIVQTMKETVGESNE.

It belongs to the PlsX family. As to quaternary structure, homodimer. Probably interacts with PlsY.

The protein resides in the cytoplasm. The catalysed reaction is a fatty acyl-[ACP] + phosphate = an acyl phosphate + holo-[ACP]. It functions in the pathway lipid metabolism; phospholipid metabolism. In terms of biological role, catalyzes the reversible formation of acyl-phosphate (acyl-PO(4)) from acyl-[acyl-carrier-protein] (acyl-ACP). This enzyme utilizes acyl-ACP as fatty acyl donor, but not acyl-CoA. This is Phosphate acyltransferase from Staphylococcus aureus (strain Mu3 / ATCC 700698).